The primary structure comprises 475 residues: Ribulose bisphosphate carboxylase large chain (475 aa).

A propeptide spanning residues 1 to 2 is cleaved from the precursor; sequence MS. Position 3 is an N-acetylproline (proline 3). Residue lysine 14 is modified to N6,N6,N6-trimethyllysine. 2 residues coordinate substrate: asparagine 123 and threonine 173. Lysine 175 acts as the Proton acceptor in catalysis. Lysine 177 serves as a coordination point for substrate. Mg(2+) is bound by residues lysine 201, aspartate 203, and glutamate 204. At lysine 201 the chain carries N6-carboxylysine. The Proton acceptor role is filled by histidine 294. Substrate contacts are provided by arginine 295, histidine 327, and serine 379.

This sequence belongs to the RuBisCO large chain family. Type I subfamily. Heterohexadecamer of 8 large chains and 8 small chains; disulfide-linked. The disulfide link is formed within the large subunit homodimers. Mg(2+) serves as cofactor. The disulfide bond which can form in the large chain dimeric partners within the hexadecamer appears to be associated with oxidative stress and protein turnover.

The protein resides in the plastid. It localises to the chloroplast. The catalysed reaction is 2 (2R)-3-phosphoglycerate + 2 H(+) = D-ribulose 1,5-bisphosphate + CO2 + H2O. It catalyses the reaction D-ribulose 1,5-bisphosphate + O2 = 2-phosphoglycolate + (2R)-3-phosphoglycerate + 2 H(+). Functionally, ruBisCO catalyzes two reactions: the carboxylation of D-ribulose 1,5-bisphosphate, the primary event in carbon dioxide fixation, as well as the oxidative fragmentation of the pentose substrate in the photorespiration process. Both reactions occur simultaneously and in competition at the same active site. In Quercus rubra (Northern red oak), this protein is Ribulose bisphosphate carboxylase large chain.